Here is a 148-residue protein sequence, read N- to C-terminus: Large ribosomal subunit protein bL9 (148 aa).

The protein belongs to the bacterial ribosomal protein bL9 family.

Binds to the 23S rRNA. The chain is Large ribosomal subunit protein bL9 from Ruminiclostridium cellulolyticum (strain ATCC 35319 / DSM 5812 / JCM 6584 / H10) (Clostridium cellulolyticum).